The primary structure comprises 413 residues: Serine hydroxymethyltransferase (413 aa).

(6S)-5,6,7,8-tetrahydrofolate contacts are provided by residues leucine 119 and 123-125 (GHL). The residue at position 228 (lysine 228) is an N6-(pyridoxal phosphate)lysine. (6S)-5,6,7,8-tetrahydrofolate is bound at residue 351–353 (SPF).

This sequence belongs to the SHMT family. In terms of assembly, homodimer. It depends on pyridoxal 5'-phosphate as a cofactor.

It localises to the cytoplasm. It carries out the reaction (6R)-5,10-methylene-5,6,7,8-tetrahydrofolate + glycine + H2O = (6S)-5,6,7,8-tetrahydrofolate + L-serine. The protein operates within one-carbon metabolism; tetrahydrofolate interconversion. Its pathway is amino-acid biosynthesis; glycine biosynthesis; glycine from L-serine: step 1/1. Catalyzes the reversible interconversion of serine and glycine with tetrahydrofolate (THF) serving as the one-carbon carrier. This reaction serves as the major source of one-carbon groups required for the biosynthesis of purines, thymidylate, methionine, and other important biomolecules. Also exhibits THF-independent aldolase activity toward beta-hydroxyamino acids, producing glycine and aldehydes, via a retro-aldol mechanism. The protein is Serine hydroxymethyltransferase of Clostridium botulinum (strain Langeland / NCTC 10281 / Type F).